A 547-amino-acid chain; its full sequence is Chaperonin GroEL (547 aa).

ATP-binding positions include 30-33, Lys51, 87-91, Gly415, and Asp496; these read TLGP and DGTTT.

Belongs to the chaperonin (HSP60) family. Forms a cylinder of 14 subunits composed of two heptameric rings stacked back-to-back. Interacts with the co-chaperonin GroES.

It localises to the cytoplasm. It carries out the reaction ATP + H2O + a folded polypeptide = ADP + phosphate + an unfolded polypeptide.. Its function is as follows. Together with its co-chaperonin GroES, plays an essential role in assisting protein folding. The GroEL-GroES system forms a nano-cage that allows encapsulation of the non-native substrate proteins and provides a physical environment optimized to promote and accelerate protein folding. The sequence is that of Chaperonin GroEL from Chlorobium phaeobacteroides (strain DSM 266 / SMG 266 / 2430).